Consider the following 352-residue polypeptide: Phosphoribosylformylglycinamidine cyclo-ligase (352 aa).

This sequence belongs to the AIR synthase family.

It is found in the cytoplasm. The enzyme catalyses 2-formamido-N(1)-(5-O-phospho-beta-D-ribosyl)acetamidine + ATP = 5-amino-1-(5-phospho-beta-D-ribosyl)imidazole + ADP + phosphate + H(+). The protein operates within purine metabolism; IMP biosynthesis via de novo pathway; 5-amino-1-(5-phospho-D-ribosyl)imidazole from N(2)-formyl-N(1)-(5-phospho-D-ribosyl)glycinamide: step 2/2. The polypeptide is Phosphoribosylformylglycinamidine cyclo-ligase (Pseudomonas putida (strain GB-1)).